A 228-amino-acid chain; its full sequence is Phosphoribosylformylglycinamidine synthase subunit PurQ (228 aa).

One can recognise a Glutamine amidotransferase type-1 domain in the interval 2–228; the sequence is TVVVVQFGGS…DGKGILQAFG (227 aa). C88 serves as the catalytic Nucleophile. Catalysis depends on residues H205 and E207.

Part of the FGAM synthase complex composed of 1 PurL, 1 PurQ and 2 PurS subunits.

Its subcellular location is the cytoplasm. The enzyme catalyses N(2)-formyl-N(1)-(5-phospho-beta-D-ribosyl)glycinamide + L-glutamine + ATP + H2O = 2-formamido-N(1)-(5-O-phospho-beta-D-ribosyl)acetamidine + L-glutamate + ADP + phosphate + H(+). It carries out the reaction L-glutamine + H2O = L-glutamate + NH4(+). It participates in purine metabolism; IMP biosynthesis via de novo pathway; 5-amino-1-(5-phospho-D-ribosyl)imidazole from N(2)-formyl-N(1)-(5-phospho-D-ribosyl)glycinamide: step 1/2. Part of the phosphoribosylformylglycinamidine synthase complex involved in the purines biosynthetic pathway. Catalyzes the ATP-dependent conversion of formylglycinamide ribonucleotide (FGAR) and glutamine to yield formylglycinamidine ribonucleotide (FGAM) and glutamate. The FGAM synthase complex is composed of three subunits. PurQ produces an ammonia molecule by converting glutamine to glutamate. PurL transfers the ammonia molecule to FGAR to form FGAM in an ATP-dependent manner. PurS interacts with PurQ and PurL and is thought to assist in the transfer of the ammonia molecule from PurQ to PurL. The sequence is that of Phosphoribosylformylglycinamidine synthase subunit PurQ from Haloquadratum walsbyi (strain DSM 16790 / HBSQ001).